The sequence spans 360 residues: MTATLERRQTASLWERFCSWITSTENRLYIGWFGVLMIPTLLTATSVFIIGFIAAPPVDIDGIREPGFRSLLYGNNIITGAIVPTSNAIGIHFYPIWEAASLDEWLYNGGPYELIVLHFFIGICAYMGREWELSYRLGMRPWIAVAFSAPVAAATAVFIIYPIGQGSFSDGMPLGISGTFNFMLVFQAEHNILMHPFHMMGVAGVFGGSLFSAMHGSLVTSSLIRERTENESANNGYKFGQEYETYNIVAAHGYFGRLIFQYASFNNSRSLHFFLALWPVVCICVTALGVSTMAFNLNGFNFNQSVVDSQGRVINTWADILNRANLGIEVMHERNAHNFPLDLASEVSLPVALNKVEING.

3 consecutive transmembrane segments (helical) span residues 29-46 (YIGW…TATS), 118-133 (HFFI…EWEL), and 142-156 (WIAV…AATA). Position 118 (histidine 118) interacts with chlorophyll a. Tyrosine 126 serves as a coordination point for pheophytin a. [CaMn4O5] cluster contacts are provided by aspartate 170 and glutamate 189. Residues 197–218 (FHMMGVAGVFGGSLFSAMHGSL) traverse the membrane as a helical segment. Histidine 198 provides a ligand contact to chlorophyll a. A quinone-binding positions include histidine 215 and 264 to 265 (SF). Histidine 215 provides a ligand contact to Fe cation. Fe cation is bound at residue histidine 272. Residues 274–288 (FLALWPVVCICVTAL) traverse the membrane as a helical segment. Residues histidine 332, glutamate 333, aspartate 342, and alanine 344 each coordinate [CaMn4O5] cluster. Positions 345 to 360 (SEVSLPVALNKVEING) are excised as a propeptide.

This sequence belongs to the reaction center PufL/M/PsbA/D family. PSII is composed of 1 copy each of membrane proteins PsbA, PsbB, PsbC, PsbD, PsbE, PsbF, PsbH, PsbI, PsbJ, PsbK, PsbL, PsbM, PsbT, PsbY, PsbZ, Psb30/Ycf12, at least 3 peripheral proteins of the oxygen-evolving complex and a large number of cofactors. It forms dimeric complexes. Requires The D1/D2 heterodimer binds P680, chlorophylls that are the primary electron donor of PSII, and subsequent electron acceptors. It shares a non-heme iron and each subunit binds pheophytin, quinone, additional chlorophylls, carotenoids and lipids. D1 provides most of the ligands for the Mn4-Ca-O5 cluster of the oxygen-evolving complex (OEC). There is also a Cl(-1) ion associated with D1 and D2, which is required for oxygen evolution. The PSII complex binds additional chlorophylls, carotenoids and specific lipids. as cofactor. In terms of processing, tyr-161 forms a radical intermediate that is referred to as redox-active TyrZ, YZ or Y-Z. Post-translationally, C-terminally processed by CTPA; processing is essential to allow assembly of the oxygen-evolving complex and thus photosynthetic growth.

It is found in the plastid. The protein localises to the chloroplast thylakoid membrane. The catalysed reaction is 2 a plastoquinone + 4 hnu + 2 H2O = 2 a plastoquinol + O2. Its function is as follows. Photosystem II (PSII) is a light-driven water:plastoquinone oxidoreductase that uses light energy to abstract electrons from H(2)O, generating O(2) and a proton gradient subsequently used for ATP formation. It consists of a core antenna complex that captures photons, and an electron transfer chain that converts photonic excitation into a charge separation. The D1/D2 (PsbA/PsbD) reaction center heterodimer binds P680, the primary electron donor of PSII as well as several subsequent electron acceptors. This is Photosystem II protein D1 from Galdieria sulphuraria (Red alga).